A 334-amino-acid chain; its full sequence is Dual specificity mitogen-activated protein kinase kinase 6 (334 aa).

Residues 1-11 show a composition bias toward basic residues; sequence MSQSKGKKRNP. The segment at 1-34 is disordered; the sequence is MSQSKGKKRNPGLKIPKEAFEQPQTSSTPPRDLD. The segment at 4 to 19 is d domain; that stretch reads SKGKKRNPGLKIPKEA. In terms of domain architecture, Protein kinase spans 53-314; that stretch reads LEPIVELGRG…YPELMQHPFF (262 aa). ATP is bound by residues 59 to 67 and Lys-82; that span reads LGRGAYGVV. Asp-179 functions as the Proton acceptor in the catalytic mechanism. Position 207 is a phosphoserine; by MAPK3 (Ser-207). A Phosphothreonine; by MAPK3 modification is found at Thr-211. Positions 311-334 are DVD domain; it reads HPFFTLHESKATDVASFVKSILGD.

This sequence belongs to the protein kinase superfamily. STE Ser/Thr protein kinase family. MAP kinase kinase subfamily. In terms of assembly, dimer. Interacts (via its D domain) with its substrates MAPK11, MAPK12, MAPK13 and MAPK14. Interacts (via its DVD domain) with MAP3Ks activators like MAP3K5/ASK1, MAP3K1/MEKK1, MAP3K2/MEKK2, MAP3K3/MEKK3, MAP3K4/MEKK4, MAP3K7/TAK1, MAP3K11/MLK3 and MAP3K17/TAOK2. Interacts with DCTN1. Interacts with EIF2AK2/PKR. Post-translationally, weakly autophosphorylated. Phosphorylated at Ser-207 and Thr-211 by the majority of M3Ks, such as MAP3K5/ASK1, MAP3K1/MEKK1, MAP3K2/MEKK2, MAP3K3/MEKK3, MAP3K4/MEKK4, MAP3K7/TAK1, MAP3K11/MLK3 and MAP3K17/TAOK2. In terms of processing, in response to genotoxic stress, MAP3K-phosphorylated MAP2K6 is ubiquitinated and degraded by the SCF(FBXO31) complex.

The protein resides in the nucleus. It localises to the cytoplasm. Its subcellular location is the cytoskeleton. The enzyme catalyses L-seryl-[protein] + ATP = O-phospho-L-seryl-[protein] + ADP + H(+). It catalyses the reaction L-threonyl-[protein] + ATP = O-phospho-L-threonyl-[protein] + ADP + H(+). The catalysed reaction is L-tyrosyl-[protein] + ATP = O-phospho-L-tyrosyl-[protein] + ADP + H(+). Its activity is regulated as follows. Activated by dual phosphorylation on Ser-207 and Thr-211 in response to a variety of cellular stresses, including UV radiation, osmotic shock, hypoxia, inflammatory cytokines, interferon gamma (IFNG), and less often by growth factors. MAP2K6/MKK6 is activated by the majority of M3Ks, such as MAP3K5/ASK1, MAP3K1/MEKK1, MAP3K2/MEKK2, MAP3K3/MEKK3, MAP3K4/MEKK4, MAP3K7/TAK1, MAP3K11/MLK3 and MAP3K17/TAOK2. Its function is as follows. Dual specificity protein kinase which acts as an essential component of the MAP kinase signal transduction pathway. With MAP3K3/MKK3, catalyzes the concomitant phosphorylation of a threonine and a tyrosine residue in the MAP kinases p38 MAPK11, MAPK12, MAPK13 and MAPK14 and plays an important role in the regulation of cellular responses to cytokines and all kinds of stresses. Especially, MAP2K3/MKK3 and MAP2K6/MKK6 are both essential for the activation of MAPK11 and MAPK13 induced by environmental stress, whereas MAP2K6/MKK6 is the major MAPK11 activator in response to TNF. MAP2K6/MKK6 also phosphorylates and activates PAK6. The p38 MAP kinase signal transduction pathway leads to direct activation of transcription factors. Nuclear targets of p38 MAP kinase include the transcription factors ATF2 and ELK1. Within the p38 MAPK signal transduction pathway, MAP3K6/MKK6 mediates phosphorylation of STAT4 through MAPK14 activation, and is therefore required for STAT4 activation and STAT4-regulated gene expression in response to IL-12 stimulation. The pathway is also crucial for IL-6-induced SOCS3 expression and down-regulation of IL-6-mediated gene induction; and for IFNG-dependent gene transcription. Has a role in osteoclast differentiation through NF-kappa-B transactivation by TNFSF11, and in endochondral ossification and since SOX9 is another likely downstream target of the p38 MAPK pathway. MAP2K6/MKK6 mediates apoptotic cell death in thymocytes. Acts also as a regulator for melanocytes dendricity, through the modulation of Rho family GTPases. This chain is Dual specificity mitogen-activated protein kinase kinase 6 (MAP2K6), found in Bos taurus (Bovine).